The primary structure comprises 453 residues: Bifunctional protein GlmU (453 aa).

Residues 1–226 (MVAIAILAAG…YEEILGINDR (226 aa)) are pyrophosphorylase. UDP-N-acetyl-alpha-D-glucosamine contacts are provided by residues 7–10 (LAAG), lysine 21, glutamine 73, and 78–79 (GT). Residue aspartate 103 participates in Mg(2+) binding. UDP-N-acetyl-alpha-D-glucosamine contacts are provided by glycine 140, glutamate 155, asparagine 170, and asparagine 224. Position 224 (asparagine 224) interacts with Mg(2+). The linker stretch occupies residues 227–247 (KQLALAYQILQNRIKDQAMAA). The segment at 248 to 453 (GVTLIDPDSI…GWRLKQPDPT (206 aa)) is N-acetyltransferase. Arginine 329 and lysine 347 together coordinate UDP-N-acetyl-alpha-D-glucosamine. The Proton acceptor role is filled by histidine 359. UDP-N-acetyl-alpha-D-glucosamine contacts are provided by tyrosine 362 and asparagine 373. Acetyl-CoA is bound by residues alanine 376, 382–383 (NY), serine 401, alanine 419, and arginine 436.

This sequence in the N-terminal section; belongs to the N-acetylglucosamine-1-phosphate uridyltransferase family. The protein in the C-terminal section; belongs to the transferase hexapeptide repeat family. In terms of assembly, homotrimer. Mg(2+) serves as cofactor.

It is found in the cytoplasm. The enzyme catalyses alpha-D-glucosamine 1-phosphate + acetyl-CoA = N-acetyl-alpha-D-glucosamine 1-phosphate + CoA + H(+). The catalysed reaction is N-acetyl-alpha-D-glucosamine 1-phosphate + UTP + H(+) = UDP-N-acetyl-alpha-D-glucosamine + diphosphate. The protein operates within nucleotide-sugar biosynthesis; UDP-N-acetyl-alpha-D-glucosamine biosynthesis; N-acetyl-alpha-D-glucosamine 1-phosphate from alpha-D-glucosamine 6-phosphate (route II): step 2/2. It functions in the pathway nucleotide-sugar biosynthesis; UDP-N-acetyl-alpha-D-glucosamine biosynthesis; UDP-N-acetyl-alpha-D-glucosamine from N-acetyl-alpha-D-glucosamine 1-phosphate: step 1/1. It participates in bacterial outer membrane biogenesis; LPS lipid A biosynthesis. Catalyzes the last two sequential reactions in the de novo biosynthetic pathway for UDP-N-acetylglucosamine (UDP-GlcNAc). The C-terminal domain catalyzes the transfer of acetyl group from acetyl coenzyme A to glucosamine-1-phosphate (GlcN-1-P) to produce N-acetylglucosamine-1-phosphate (GlcNAc-1-P), which is converted into UDP-GlcNAc by the transfer of uridine 5-monophosphate (from uridine 5-triphosphate), a reaction catalyzed by the N-terminal domain. The chain is Bifunctional protein GlmU from Cyanothece sp. (strain PCC 7425 / ATCC 29141).